We begin with the raw amino-acid sequence, 61 residues long: Small ribosomal subunit protein uS14 (61 aa).

Residues Cys24, Cys27, Cys40, and Cys43 each contribute to the Zn(2+) site.

This sequence belongs to the universal ribosomal protein uS14 family. Zinc-binding uS14 subfamily. As to quaternary structure, part of the 30S ribosomal subunit. Contacts proteins S3 and S10. Zn(2+) serves as cofactor.

Its function is as follows. Binds 16S rRNA, required for the assembly of 30S particles and may also be responsible for determining the conformation of the 16S rRNA at the A site. This Geobacter sp. (strain M21) protein is Small ribosomal subunit protein uS14.